The primary structure comprises 352 residues: Glycerol-1-phosphate dehydrogenase [NAD(P)+] (352 aa).

NAD(+)-binding positions include Gly91–Asp95 and Thr113–Ser116. Asp118 contacts substrate. Residue Ser122 participates in NAD(+) binding. Position 169 (Glu169) interacts with substrate. Glu169 and His249 together coordinate Zn(2+). Residue His253 participates in substrate binding. His269 contributes to the Zn(2+) binding site.

This sequence belongs to the glycerol-1-phosphate dehydrogenase family. In terms of assembly, homodimer. The cofactor is Zn(2+).

Its subcellular location is the cytoplasm. The enzyme catalyses sn-glycerol 1-phosphate + NAD(+) = dihydroxyacetone phosphate + NADH + H(+). It carries out the reaction sn-glycerol 1-phosphate + NADP(+) = dihydroxyacetone phosphate + NADPH + H(+). It participates in membrane lipid metabolism; glycerophospholipid metabolism. Its function is as follows. Catalyzes the NAD(P)H-dependent reduction of dihydroxyacetonephosphate (DHAP or glycerone phosphate) to glycerol 1-phosphate (G1P). The G1P thus generated is used as the glycerophosphate backbone of phospholipids in the cellular membranes of Archaea. The polypeptide is Glycerol-1-phosphate dehydrogenase [NAD(P)+] (Caldivirga maquilingensis (strain ATCC 700844 / DSM 13496 / JCM 10307 / IC-167)).